A 373-amino-acid polypeptide reads, in one-letter code: Leucoanthocyanidin dioxygenase 2 (373 aa).

The 100-residue stretch at Leu-216 to Pro-315 folds into the Fe2OG dioxygenase domain. Fe cation contacts are provided by His-240, Asp-242, and His-296. Residue Arg-306 participates in 2-oxoglutarate binding.

The protein belongs to the iron/ascorbate-dependent oxidoreductase family. L-ascorbate serves as cofactor. Requires Fe(2+) as cofactor.

The enzyme catalyses a (2R,3S,4S)-leucoanthocyanidin + 2-oxoglutarate + O2 = a 4-H-anthocyanidin with a 3-hydroxy group + succinate + CO2 + 2 H2O. The protein operates within pigment biosynthesis; anthocyanin biosynthesis. In terms of biological role, involved in anthocyanin and protoanthocyanidin biosynthesis by catalyzing the oxidation of leucoanthocyanidins into anthocyanidins. The polypeptide is Leucoanthocyanidin dioxygenase 2 (Oryza sativa subsp. japonica (Rice)).